Consider the following 313-residue polypeptide: MKCKWACLRLRDAFYKGHVLVLAEYADLKYLGFQKYEYFEYVLLQLNGSAQFCGAMATNPRYCLQVFSAADDMCSVRHHVKTAFKTPVLGHVCVLQHKPAMYACLKEWYTLFEFQVPLLRSQSLVWEFPHVVVFDLDSTLITEQEDVQIRDPQIYDDLSELRDLGCVLVLWSYGSRDHVAHSLRAVQLTPYFDAIISEGSVAEDAPAATTETTDLQMQSRYVSSNFSFDMHAESGAELPKSPKVVIKILADKGVNYFKSITLVDDLPSNNFAYDYYVRVKRCPVPLRDWRRYQDEILDNLAEYDSLYVSNKTI.

This is an uncharacterized protein from Orgyia pseudotsugata multicapsid polyhedrosis virus (OpMNPV).